The following is a 599-amino-acid chain: 2-succinyl-5-enolpyruvyl-6-hydroxy-3-cyclohexene-1-carboxylate synthase (599 aa).

Low complexity predominate over residues 1–21 (MTSENPLDPNNAYAAADDAPL). Residues 1 to 35 (MTSENPLDPNNAYAAADDAPLSEGDPTGAPADSGS) form a disordered region.

Belongs to the TPP enzyme family. MenD subfamily. In terms of assembly, homodimer. It depends on Mg(2+) as a cofactor. Requires Mn(2+) as cofactor. The cofactor is thiamine diphosphate.

It catalyses the reaction isochorismate + 2-oxoglutarate + H(+) = 5-enolpyruvoyl-6-hydroxy-2-succinyl-cyclohex-3-ene-1-carboxylate + CO2. It participates in quinol/quinone metabolism; 1,4-dihydroxy-2-naphthoate biosynthesis; 1,4-dihydroxy-2-naphthoate from chorismate: step 2/7. Its pathway is quinol/quinone metabolism; menaquinone biosynthesis. Functionally, catalyzes the thiamine diphosphate-dependent decarboxylation of 2-oxoglutarate and the subsequent addition of the resulting succinic semialdehyde-thiamine pyrophosphate anion to isochorismate to yield 2-succinyl-5-enolpyruvyl-6-hydroxy-3-cyclohexene-1-carboxylate (SEPHCHC). This Arthrobacter sp. (strain FB24) protein is 2-succinyl-5-enolpyruvyl-6-hydroxy-3-cyclohexene-1-carboxylate synthase.